Here is a 461-residue protein sequence, read N- to C-terminus: Serine/threonine-protein kinase VHS1 (461 aa).

The Protein kinase domain maps to 12–337 (YLITSQIGEG…KEVSSITSFT (326 aa)). ATP contacts are provided by residues 18–26 (IGEGAYGLV) and Lys-41. Catalysis depends on Asp-185, which acts as the Proton acceptor. A disordered region spans residues 384-433 (LSYTSSSEEEDGIKEGIDDDNGSRSGSFGTLDTDTGLHSSFTSTSCESDN). Residues 390–403 (SEEEDGIKEGIDDD) show a composition bias toward acidic residues. Positions 406–433 (SRSGSFGTLDTDTGLHSSFTSTSCESDN) are enriched in polar residues.

The protein belongs to the protein kinase superfamily. Ser/Thr protein kinase family.

The protein localises to the cytoplasm. It catalyses the reaction L-seryl-[protein] + ATP = O-phospho-L-seryl-[protein] + ADP + H(+). The catalysed reaction is L-threonyl-[protein] + ATP = O-phospho-L-threonyl-[protein] + ADP + H(+). Probable serine/threonine protein kinase involved in the G1-S transition. In Saccharomyces cerevisiae (strain ATCC 204508 / S288c) (Baker's yeast), this protein is Serine/threonine-protein kinase VHS1 (VHS1).